We begin with the raw amino-acid sequence, 166 residues long: UPF0304 protein PBPRA2768 (166 aa).

The protein belongs to the UPF0304 family.

This chain is UPF0304 protein PBPRA2768, found in Photobacterium profundum (strain SS9).